The chain runs to 896 residues: Translation initiation factor IF-2 (896 aa).

The tract at residues Leu32–His306 is disordered. Composition is skewed to polar residues over residues Ala35 to Ala48 and Ala114 to Glu126. A compositionally biased stretch (basic and acidic residues) spans Ala156–Pro170. Residues Gln213 to Ala237 are compositionally biased toward polar residues. The span at Arg256–Gly280 shows a compositional bias: basic and acidic residues. Residues Ile401–Lys570 form the tr-type G domain. The segment at Gly410–Thr417 is G1. Gly410–Thr417 lines the GTP pocket. The interval Ala435 to His439 is G2. The segment at Asp456–Gly459 is G3. GTP is bound by residues Asp456 to His460 and Asn510 to Asp513. A G4 region spans residues Asn510–Asp513. A G5 region spans residues Ser546–Lys548.

This sequence belongs to the TRAFAC class translation factor GTPase superfamily. Classic translation factor GTPase family. IF-2 subfamily.

It is found in the cytoplasm. One of the essential components for the initiation of protein synthesis. Protects formylmethionyl-tRNA from spontaneous hydrolysis and promotes its binding to the 30S ribosomal subunits. Also involved in the hydrolysis of GTP during the formation of the 70S ribosomal complex. In Chlamydia muridarum (strain MoPn / Nigg), this protein is Translation initiation factor IF-2 (infB).